Here is a 286-residue protein sequence, read N- to C-terminus: Shikimate dehydrogenase (NADP(+)) (286 aa).

Residues Ser-19–Ser-21 and Thr-66 contribute to the shikimate site. Catalysis depends on Lys-70, which acts as the Proton acceptor. Positions 91 and 107 each coordinate shikimate. NADP(+) is bound by residues Gly-129–Ala-133 and Leu-229. Tyr-231 serves as a coordination point for shikimate. Position 252 (Gly-252) interacts with NADP(+).

This sequence belongs to the shikimate dehydrogenase family. Homodimer.

The catalysed reaction is shikimate + NADP(+) = 3-dehydroshikimate + NADPH + H(+). It participates in metabolic intermediate biosynthesis; chorismate biosynthesis; chorismate from D-erythrose 4-phosphate and phosphoenolpyruvate: step 4/7. Involved in the biosynthesis of the chorismate, which leads to the biosynthesis of aromatic amino acids. Catalyzes the reversible NADPH linked reduction of 3-dehydroshikimate (DHSA) to yield shikimate (SA). The sequence is that of Shikimate dehydrogenase (NADP(+)) from Prochlorococcus marinus (strain MIT 9301).